The chain runs to 530 residues: Copine-D (530 aa).

C2 domains lie at 1–122 (MNPI…RMKM) and 130–248 (LSGS…EFEI). Ca(2+)-binding residues include aspartate 25, aspartate 31, aspartate 85, aspartate 87, and aspartate 100. The region spanning 289 to 507 (NLMVAIDCTA…ALAHETLKEI (219 aa)) is the VWFA domain.

Belongs to the copine family. Requires Ca(2+) as cofactor.

The protein is Copine-D (cpnD) of Dictyostelium discoideum (Social amoeba).